Reading from the N-terminus, the 225-residue chain is Putative elongation factor 1 gamma homolog (225 aa).

The 132-residue stretch at 94–225 (DFKTRADILR…MCETEMQPIK (132 aa)) folds into the GST C-terminal domain.

The sequence is that of Putative elongation factor 1 gamma homolog from Saccharomyces cerevisiae (strain ATCC 204508 / S288c) (Baker's yeast).